The chain runs to 312 residues: Dehydrogenase/reductase SDR family member 7C (312 aa).

Residues 1 to 18 form the signal peptide; that stretch reads MGVMAMLMLPLLLLGISG. Residues serine 47, leucine 49, tyrosine 192, lysine 196, and serine 227 each contribute to the NAD(+) site. Tyrosine 192 functions as the Proton acceptor in the catalytic mechanism.

This sequence belongs to the short-chain dehydrogenases/reductases (SDR) family.

The protein resides in the sarcoplasmic reticulum membrane. It catalyses the reaction all-trans-retinol + NAD(+) = all-trans-retinal + NADH + H(+). In terms of biological role, NADH-dependent oxidoreductase which catalyzes the oxidation of all-trans-retinol to all-trans-retinal. Plays a role in the regulation of cardiac and skeletal muscle metabolic functions. Maintains Ca(2+) intracellular homeostasis by repressing Ca(2+) release from the sarcoplasmic reticulum (SR) in myotubes, possibly through local alternations in NAD/NADH or retinol/retinal. Also plays a role in Ca(2+) homeostasis by controlling Ca(2+) overload in the cytosol and the SR in myotubes. Involved in glucose uptake into skeletal muscles and muscle performance by activating PI3K and mTORC2-mediated AKT1 phosphorylation signaling pathways, possibly through the action of its downstream catalytic product all-trans-retinoic acid. This chain is Dehydrogenase/reductase SDR family member 7C, found in Homo sapiens (Human).